A 388-amino-acid polypeptide reads, in one-letter code: 3beta-hydroxysteroid dehydrogenase dhs-16 (388 aa).

Residues 2–22 form a helical membrane-spanning segment; sequence LELIYILPLLCFVYFLFRRFV. Tyrosine 188 (proton acceptor) is an active-site residue. 2 consecutive transmembrane segments (helical) span residues 300 to 320 and 346 to 366; these read AIFM…WILA and IQWI…TIFF.

It belongs to the short-chain dehydrogenases/reductases (SDR) family. Strongly expressed in the hypodermis and posterior pharyngeal bulb and in a number of unidentified neurons of the head and tail.

The protein resides in the membrane. The catalysed reaction is lathosterol + NAD(+) = 5alpha-cholest-7-en-3-one + NADH + H(+). It functions in the pathway steroid hormone biosynthesis; dafachronic acid biosynthesis. Functionally, 3beta-hydroxysteroid dehydrogenase that converts 3beta-hydroxysteroids to 3-ketosteroids, an essential step in the production of dafachronic acids from cholesterol. Catalyzes the dehydrogenation of lathosterol (5alpha-cholest-7-en-3beta-ol) to lathosterone (5alpha-cholest-7-en-3-one), a step required for maximal biosynthesis of Delta(7)-dafachronic acid. Dafachronic acids act as ligands and bind directly to the nuclear hormone receptor (NHR) daf-12, suppressing dauer formation and inducing reproductive growth, they can also regulate C.elegans lifespan. This is 3beta-hydroxysteroid dehydrogenase dhs-16 (dhs-16) from Caenorhabditis elegans.